We begin with the raw amino-acid sequence, 268 residues long: Ribosomal RNA small subunit methyltransferase A (268 aa).

Residues N23, I25, G50, E72, D97, and N116 each contribute to the S-adenosyl-L-methionine site.

Belongs to the class I-like SAM-binding methyltransferase superfamily. rRNA adenine N(6)-methyltransferase family. RsmA subfamily.

The protein localises to the cytoplasm. The enzyme catalyses adenosine(1518)/adenosine(1519) in 16S rRNA + 4 S-adenosyl-L-methionine = N(6)-dimethyladenosine(1518)/N(6)-dimethyladenosine(1519) in 16S rRNA + 4 S-adenosyl-L-homocysteine + 4 H(+). In terms of biological role, specifically dimethylates two adjacent adenosines (A1518 and A1519) in the loop of a conserved hairpin near the 3'-end of 16S rRNA in the 30S particle. May play a critical role in biogenesis of 30S subunits. In Rickettsia bellii (strain RML369-C), this protein is Ribosomal RNA small subunit methyltransferase A.